Here is a 141-residue protein sequence, read N- to C-terminus: Large ribosomal subunit protein uL23B (141 aa).

Residues 1 to 22 form a disordered region; it reads MSVGKAKGAQKTVQKGIHNKVA.

This sequence belongs to the universal ribosomal protein uL23 family. Component of the large ribosomal subunit (LSU). Mature yeast ribosomes consist of a small (40S) and a large (60S) subunit. The 40S small subunit contains 1 molecule of ribosomal RNA (18S rRNA) and at least 33 different proteins. The large 60S subunit contains 3 rRNA molecules (25S, 5.8S and 5S rRNA) and at least 46 different proteins. uL23 is associated with the polypeptide exit tunnel.

It is found in the cytoplasm. Functionally, this protein binds to a specific region on the 26S rRNA. In terms of biological role, component of the ribosome, a large ribonucleoprotein complex responsible for the synthesis of proteins in the cell. The small ribosomal subunit (SSU) binds messenger RNAs (mRNAs) and translates the encoded message by selecting cognate aminoacyl-transfer RNA (tRNA) molecules. The large subunit (LSU) contains the ribosomal catalytic site termed the peptidyl transferase center (PTC), which catalyzes the formation of peptide bonds, thereby polymerizing the amino acids delivered by tRNAs into a polypeptide chain. The nascent polypeptides leave the ribosome through a tunnel in the LSU and interact with protein factors that function in enzymatic processing, targeting, and the membrane insertion of nascent chains at the exit of the ribosomal tunnel. uL23 is a major component of the universal docking site for these factors at the polypeptide exit tunnel. This is Large ribosomal subunit protein uL23B (rpl2502) from Schizosaccharomyces pombe (strain 972 / ATCC 24843) (Fission yeast).